Consider the following 152-residue polypeptide: D-aminoacyl-tRNA deacylase (152 aa).

Positions 142–143 (GP) match the Gly-cisPro motif, important for rejection of L-amino acids motif.

This sequence belongs to the DTD family. In terms of assembly, homodimer.

The protein resides in the cytoplasm. The catalysed reaction is glycyl-tRNA(Ala) + H2O = tRNA(Ala) + glycine + H(+). It catalyses the reaction a D-aminoacyl-tRNA + H2O = a tRNA + a D-alpha-amino acid + H(+). An aminoacyl-tRNA editing enzyme that deacylates mischarged D-aminoacyl-tRNAs. Also deacylates mischarged glycyl-tRNA(Ala), protecting cells against glycine mischarging by AlaRS. Acts via tRNA-based rather than protein-based catalysis; rejects L-amino acids rather than detecting D-amino acids in the active site. By recycling D-aminoacyl-tRNA to D-amino acids and free tRNA molecules, this enzyme counteracts the toxicity associated with the formation of D-aminoacyl-tRNA entities in vivo and helps enforce protein L-homochirality. The polypeptide is D-aminoacyl-tRNA deacylase (Burkholderia ambifaria (strain ATCC BAA-244 / DSM 16087 / CCUG 44356 / LMG 19182 / AMMD) (Burkholderia cepacia (strain AMMD))).